A 436-amino-acid chain; its full sequence is MGQVLPLVTRQGDRIAIVSGLRTPFARQATAFHGIPAVDLGKMVVGELLARSEIPAEVIEQLVFGQVVQMPEAPNIAREIVLGTGMNVHTDAYSVSRACATSFQAVANVAESLMAGTIRAGIAGGADSSSVLPIGVSKKLARVLVDVNKARTMSQRLKLFSRLRLRDLMPVPPAVAEYSTGLRMGDTAEQMAKTYGITREQQDALAHRSHQRAAQSWSEGKLKEEVMTAFIPPYKQLLAEDNNICGNSSLADYAKLRPAFDRKHGTVTAANSTPLTDGAAAVILMTESRTKELGLVPLGYLRSYAFTAIDVWQDMLLGPAWSTPLALERAGLTMADLTLIDMHEAFAAQTLANIQLLGSERFACNVLGRAHATGEVDDSKFNVLGGSIAYGHPFAATGARIITQTLHELRRRGGGFGLVTACAAGGLGAAMVLEAE.

The active-site Acyl-thioester intermediate is the cysteine 99. Catalysis depends on proton acceptor residues histidine 392 and cysteine 422.

This sequence belongs to the thiolase-like superfamily. Thiolase family. As to quaternary structure, heterotetramer of two alpha chains (FadJ) and two beta chains (FadI).

It localises to the cytoplasm. The catalysed reaction is an acyl-CoA + acetyl-CoA = a 3-oxoacyl-CoA + CoA. Its pathway is lipid metabolism; fatty acid beta-oxidation. Functionally, catalyzes the final step of fatty acid oxidation in which acetyl-CoA is released and the CoA ester of a fatty acid two carbons shorter is formed. This Shigella dysenteriae serotype 1 (strain Sd197) protein is 3-ketoacyl-CoA thiolase.